Consider the following 688-residue polypeptide: Nucleolar protein 10 (688 aa).

N-acetylmethionine is present on Met1. Ser25 carries the phosphoserine modification. 7 WD repeats span residues 44 to 82 (ELIQ…CYDT), 88 to 124 (KFER…FHSQ), 127 to 163 (FYYK…RLNL), 170 to 205 (NPLQ…CWDP), 219 to 258 (NSVT…LYDL), 262 to 300 (KPLL…MWNK), and 304 to 341 (KIFT…IYYI). The stretch at 423 to 446 (EYRKDKIRQKIEETRAQRVQLKKL) forms a coiled coil. Phosphoserine is present on Ser475. Phosphothreonine is present on Thr481. Ser514 carries the post-translational modification Phosphoserine. Coiled-coil stretches lie at residues 514–589 (SEKR…TVLK) and 640–673 (SKQL…LRRS). Disordered regions lie at residues 529–557 (LREK…EKAW) and 645–688 (FTLK…RSFH). Residues 648-663 (KRSEQQKKQQEAEKLH) show a composition bias toward basic and acidic residues. Basic residues predominate over residues 664–688 (RQERKRLRRSAGHLKSRHKRGRSFH).

The protein belongs to the WD repeat NOL10/ENP2 family.

The protein resides in the nucleus. It is found in the nucleolus. The chain is Nucleolar protein 10 (NOL10) from Homo sapiens (Human).